Reading from the N-terminus, the 140-residue chain is Pre-mRNA-splicing factor NTC20 (140 aa).

Serine 139 bears the Phosphoserine mark.

As to quaternary structure, belongs to the NTC complex (or PRP19-associated complex), composed of at least CEF1, CLF1, ISY1, NTC20, SNT309, SYF1, SYF2, and PRP19. The NTC complex associates with the spliceosome after the release of the U1 and U4 snRNAs and forms the CWC spliceosome subcomplex (or CEF1-associated complex) reminiscent of a late-stage spliceosome composed also of the U2, U5 and U6 snRNAs and at least BUD13, BRR2, CDC40, CUS1, CWC2, CWC15, CWC21, CWC22, CWC23, CWC24, CWC25, CWC27, ECM2, HSH155, IST3, LEA1, MSL1, PRP8, PRP9, PRP11, PRP21, PRP22, PRP45, PRP46, SLU7, SMB1, SMD1, SMD2, SMD3, SMX2, SMX3, SNU114, SPP2, RSE1 and YJU2. Interacts with CEF1, CLF1, ISY1, PRP46, and SYF1.

The protein localises to the nucleus. In terms of biological role, involved in pre-mRNA splicing. As a component of the NTC complex, associates to the spliceosome to mediate conformational rearrangement or to stabilize the structure of the spliceosome after U4 snRNA dissociation, which leads to spliceosome maturation. In Saccharomyces cerevisiae (strain ATCC 204508 / S288c) (Baker's yeast), this protein is Pre-mRNA-splicing factor NTC20 (NTC20).